We begin with the raw amino-acid sequence, 348 residues long: Protein RecA (348 aa).

64–71 (GPESSGKT) contributes to the ATP binding site. A compositionally biased stretch (basic and acidic residues) spans 325-335 (YEIDGANKEPL). The disordered stretch occupies residues 325–348 (YEIDGANKEPLEETEETLSLLDDE). A compositionally biased stretch (acidic residues) spans 336-348 (EETEETLSLLDDE).

It belongs to the RecA family.

Its subcellular location is the cytoplasm. In terms of biological role, can catalyze the hydrolysis of ATP in the presence of single-stranded DNA, the ATP-dependent uptake of single-stranded DNA by duplex DNA, and the ATP-dependent hybridization of homologous single-stranded DNAs. It interacts with LexA causing its activation and leading to its autocatalytic cleavage. The sequence is that of Protein RecA from Listeria welshimeri serovar 6b (strain ATCC 35897 / DSM 20650 / CCUG 15529 / CIP 8149 / NCTC 11857 / SLCC 5334 / V8).